A 272-amino-acid polypeptide reads, in one-letter code: Exosome complex component MTR3 (272 aa).

The tract at residues M1–L36 is disordered.

Belongs to the RNase PH family. As to quaternary structure, component of the RNA exosome core complex (Exo-9), composed of EXOSC1, EXOSC2, EXOSC3, EXOSC4, EXOSC5, EXOSC6, EXOSC7, EXOSC8 and EXOSC9; within the complex interacts with EXOSC1, EXOSC7 and EXOSC8. The catalytically inactive Exo-9 may associate with the catalytic subunit EXOSC10/RRP6. Exo-9 may associate with DIS3 to form the nucleolar exosome complex, or DIS3L to form the cytoplasmic exosome complex. Exo-9 is formed by a hexameric base ring consisting of the heterodimers EXOSC4-EXOSC9, EXOSC5-EXOSC8 and EXOSC6-EXOSC7, and a cap ring consisting of EXOSC1, EXOSC2 and EXOSC3. The RNA exosome complex associates with cofactors EXOSC10/RRP6, C1D/RRP47, MPHOSPH6/MPP6 and MTREX/MTR4.

It localises to the cytoplasm. The protein localises to the nucleus. Its subcellular location is the nucleolus. In terms of biological role, non-catalytic component of the RNA exosome complex which has 3'-&gt;5' exoribonuclease activity and participates in a multitude of cellular RNA processing and degradation events. In the nucleus, the RNA exosome complex is involved in proper maturation of stable RNA species such as rRNA, snRNA and snoRNA, in the elimination of RNA processing by-products and non-coding 'pervasive' transcripts, such as antisense RNA species and promoter-upstream transcripts (PROMPTs), and of mRNAs with processing defects, thereby limiting or excluding their export to the cytoplasm. The RNA exosome may be involved in Ig class switch recombination (CSR) and/or Ig variable region somatic hypermutation (SHM) by targeting AICDA deamination activity to transcribed dsDNA substrates. In the cytoplasm, the RNA exosome complex is involved in general mRNA turnover and specifically degrades inherently unstable mRNAs containing AU-rich elements (AREs) within their 3' untranslated regions, and in RNA surveillance pathways, preventing translation of aberrant mRNAs. It seems to be involved in degradation of histone mRNA. The catalytic inactive RNA exosome core complex of 9 subunits (Exo-9) is proposed to play a pivotal role in the binding and presentation of RNA for ribonucleolysis, and to serve as a scaffold for the association with catalytic subunits and accessory proteins or complexes. The polypeptide is Exosome complex component MTR3 (EXOSC6) (Homo sapiens (Human)).